A 526-amino-acid polypeptide reads, in one-letter code: Cytochrome P450 monooxygenase patI (526 aa).

Over 1–6 (MDILQL) the chain is Cytoplasmic. A helical membrane pass occupies residues 7–29 (APTHLLAILLSSTSALFLITYLL). The Lumenal segment spans residues 30–526 (RAGHRPSDLP…EAQEVFARFD (497 aa)). The N-linked (GlcNAc...) asparagine glycan is linked to N81. Residue C446 participates in heme binding.

The protein belongs to the cytochrome P450 family. Heme is required as a cofactor.

Its subcellular location is the endoplasmic reticulum membrane. It catalyses the reaction 3-hydroxybenzyl alcohol + reduced [NADPH--hemoprotein reductase] + O2 = gentisyl alcohol + oxidized [NADPH--hemoprotein reductase] + H2O + H(+). Its pathway is mycotoxin biosynthesis; patulin biosynthesis. Its function is as follows. Cytochrome P450 monooxygenase; part of the gene cluster that mediates the biosynthesis of patulin, an acetate-derived tetraketide mycotoxin produced by several fungal species that shows antimicrobial properties against several bacteria. PatI catalyzes the conversion of m-hydroxybenzyl alcohol into gentisyl alcohol. The pathway begins with the synthesis of 6-methylsalicylic acid by the polyketide synthase (PKS) patK via condensation of acetate and malonate units. The 6-methylsalicylic acid decarboxylase patG then catalyzes the decarboxylation of 6-methylsalicylic acid to yield m-cresol (also known as 3-methylphenol). These first reactions occur in the cytosol. The intermediate m-cresol is then transported into the endoplasmic reticulum where the cytochrome P450 monooxygenase patH converts it to m-hydroxybenzyl alcohol, which is further converted to gentisyl alcohol by the cytochrome P450 monooxygenase patI. The oxidoreductases patJ and patO further convert gentisyl alcohol to isoepoxydon in the vacuole. PatN catalyzes then the transformation of isoepoxydon into phyllostine. The cluster protein patF is responsible for the conversion from phyllostine to neopatulin whereas the alcohol dehydrogenase patD converts neopatulin to E-ascladiol. The steps between isoepoxydon and E-ascladiol occur in the cytosol, and E-ascladiol is probably secreted to the extracellular space by one of the cluster-specific transporters patC or patM. Finally, the secreted patulin synthase patE catalyzes the conversion of E-ascladiol to patulin. This Penicillium expansum (Blue mold rot fungus) protein is Cytochrome P450 monooxygenase patI.